We begin with the raw amino-acid sequence, 545 residues long: CTP synthase (545 aa).

An amidoligase domain region spans residues 1–266 (MTTNYIFVTG…DDYICKRFSL (266 aa)). Ser-14 serves as a coordination point for CTP. Position 14 (Ser-14) interacts with UTP. Residues 15-20 (SLGKGI) and Asp-72 contribute to the ATP site. Mg(2+) contacts are provided by Asp-72 and Glu-140. Residues 147–149 (DIE), 187–192 (KTKPTQ), and Lys-223 contribute to the CTP site. Residues 187 to 192 (KTKPTQ) and Lys-223 each bind UTP. 239–241 (KDV) is a binding site for ATP. The 252-residue stretch at 291 to 542 (TIGMVGKYIE…VKAASEFQKR (252 aa)) folds into the Glutamine amidotransferase type-1 domain. Gly-352 serves as a coordination point for L-glutamine. Residue Cys-379 is the Nucleophile; for glutamine hydrolysis of the active site. Residues 380–383 (LGMQ), Glu-403, and Arg-470 contribute to the L-glutamine site. Active-site residues include His-515 and Glu-517.

The protein belongs to the CTP synthase family. As to quaternary structure, homotetramer.

The catalysed reaction is UTP + L-glutamine + ATP + H2O = CTP + L-glutamate + ADP + phosphate + 2 H(+). The enzyme catalyses L-glutamine + H2O = L-glutamate + NH4(+). It catalyses the reaction UTP + NH4(+) + ATP = CTP + ADP + phosphate + 2 H(+). Its pathway is pyrimidine metabolism; CTP biosynthesis via de novo pathway; CTP from UDP: step 2/2. Allosterically activated by GTP, when glutamine is the substrate; GTP has no effect on the reaction when ammonia is the substrate. The allosteric effector GTP functions by stabilizing the protein conformation that binds the tetrahedral intermediate(s) formed during glutamine hydrolysis. Inhibited by the product CTP, via allosteric rather than competitive inhibition. Its function is as follows. Catalyzes the ATP-dependent amination of UTP to CTP with either L-glutamine or ammonia as the source of nitrogen. Regulates intracellular CTP levels through interactions with the four ribonucleotide triphosphates. The protein is CTP synthase of Escherichia coli O127:H6 (strain E2348/69 / EPEC).